The sequence spans 253 residues: Bacitracin export ATP-binding protein BceA (253 aa).

One can recognise an ABC transporter domain in the interval 4–243 (LEATNIHKSY…TFFKDIMKTQ (240 aa)). 40-47 (GASGSGKT) is a binding site for ATP.

The protein belongs to the ABC transporter superfamily. In terms of assembly, the complex is composed of two ATP-binding proteins (BceA) and two transmembrane proteins (BceB).

In terms of biological role, part of the ABC transporter complex BceAB (TC 3.A.1.123.5) involved in bacitracin export. Responsible for energy coupling to the transport system. The protein is Bacitracin export ATP-binding protein BceA (bceA) of Halalkalibacterium halodurans (strain ATCC BAA-125 / DSM 18197 / FERM 7344 / JCM 9153 / C-125) (Bacillus halodurans).